We begin with the raw amino-acid sequence, 300 residues long: Acetylglutamate kinase (300 aa).

Substrate contacts are provided by residues 68-69 (GG), arginine 90, and asparagine 195.

It belongs to the acetylglutamate kinase family. ArgB subfamily.

It is found in the cytoplasm. The catalysed reaction is N-acetyl-L-glutamate + ATP = N-acetyl-L-glutamyl 5-phosphate + ADP. It functions in the pathway amino-acid biosynthesis; L-arginine biosynthesis; N(2)-acetyl-L-ornithine from L-glutamate: step 2/4. In terms of biological role, catalyzes the ATP-dependent phosphorylation of N-acetyl-L-glutamate. This is Acetylglutamate kinase from Halorhodospira halophila (strain DSM 244 / SL1) (Ectothiorhodospira halophila (strain DSM 244 / SL1)).